Consider the following 249-residue polypeptide: MRGPLCFTLIAIAVTSVVAHTTVYGVWINGVFQGDGRDVYIRSPPNNDPVKDITSSAMACNVNNSPVGTTLSVAGGDRFTFEWYHDNRDDDIIAASHLGPIAVYIAPTTSNGAGTVWTKIFEDVYNGTWATTRLISAHGQHTVVIPEVPAGDYLLRAEIAALHEAYSLYSQVPSKGTQFYISCAQIRVTSESASGSELSANTAFPGTYTDSTPGILWNVYDQDPTEYVAPGPDVWSGAPGGSISQVGSA.

The first 19 residues, 1–19, serve as a signal peptide directing secretion; sequence MRGPLCFTLIAIAVTSVVA. Cu(2+)-binding residues include His-20 and His-97. Cysteines 60 and 183 form a disulfide. His-163 provides a ligand contact to O2. Tyr-180 lines the Cu(2+) pocket.

It belongs to the polysaccharide monooxygenase AA9 family. Cu(2+) serves as cofactor.

It localises to the secreted. The catalysed reaction is [(1-&gt;4)-beta-D-glucosyl]n+m + reduced acceptor + O2 = 4-dehydro-beta-D-glucosyl-[(1-&gt;4)-beta-D-glucosyl]n-1 + [(1-&gt;4)-beta-D-glucosyl]m + acceptor + H2O.. In terms of biological role, lytic polysaccharide monooxygenase (LPMO) that depolymerizes crystalline and amorphous polysaccharides via the oxidation of scissile alpha- or beta-(1-4)-glycosidic bonds, yielding C4 oxidation products. Catalysis by LPMOs requires the reduction of the active-site copper from Cu(II) to Cu(I) by a reducing agent and H(2)O(2) or O(2) as a cosubstrate. Active on cellulose and cello-oligosaccharides, as well as plant cell wall-derived hemicellulosic polysaccharides. Also active on cello-oligosaccharides such as cellohexaose, cellopentaose or cellotetraose. This Armillaria gallica (Bulbous honey fungus) protein is AA9 family lytic polysaccharide monooxygenase A.